Consider the following 463-residue polypeptide: uncharacterized protein (463 aa).

Residues 1 to 23 (MKFSSIPIASTLLSLLVASSVTA) form the signal peptide. Disordered stretches follow at residues 174–200 (STYN…TKAS) and 239–258 (GAST…QRKN).

The protein belongs to the but2 family.

The protein localises to the cytoplasm. This is an uncharacterized protein from Schizosaccharomyces pombe (strain 972 / ATCC 24843) (Fission yeast).